A 354-amino-acid polypeptide reads, in one-letter code: tRNA-specific 2-thiouridylase MnmA (354 aa).

Residues Ala-7–Ser-14 and Met-33 contribute to the ATP site. Cys-94 functions as the Nucleophile in the catalytic mechanism. Cys-94 and Cys-192 form a disulfide bridge. Residue Gly-118 coordinates ATP. The tract at residues Lys-141–Gln-143 is interaction with tRNA. The active-site Cysteine persulfide intermediate is Cys-192. The interval Arg-296–Tyr-297 is interaction with tRNA.

Belongs to the MnmA/TRMU family.

The protein localises to the cytoplasm. The enzyme catalyses S-sulfanyl-L-cysteinyl-[protein] + uridine(34) in tRNA + AH2 + ATP = 2-thiouridine(34) in tRNA + L-cysteinyl-[protein] + A + AMP + diphosphate + H(+). Catalyzes the 2-thiolation of uridine at the wobble position (U34) of tRNA, leading to the formation of s(2)U34. The sequence is that of tRNA-specific 2-thiouridylase MnmA from Trichlorobacter lovleyi (strain ATCC BAA-1151 / DSM 17278 / SZ) (Geobacter lovleyi).